Consider the following 293-residue polypeptide: Ribosomal protein L11 methyltransferase (293 aa).

T145, G166, D188, and N230 together coordinate S-adenosyl-L-methionine.

The protein belongs to the methyltransferase superfamily. PrmA family.

It is found in the cytoplasm. It catalyses the reaction L-lysyl-[protein] + 3 S-adenosyl-L-methionine = N(6),N(6),N(6)-trimethyl-L-lysyl-[protein] + 3 S-adenosyl-L-homocysteine + 3 H(+). Its function is as follows. Methylates ribosomal protein L11. This is Ribosomal protein L11 methyltransferase from Shewanella baltica (strain OS155 / ATCC BAA-1091).